A 352-amino-acid polypeptide reads, in one-letter code: Holliday junction branch migration complex subunit RuvB (352 aa).

Residues 1-26 (MIETDKLRAAAPERLISPQPADRQED) are disordered. Positions 4-193 (TDKLRAAAPE…FGIVSRLEFY (190 aa)) are large ATPase domain (RuvB-L). Residues Leu32, Arg33, Gly74, Lys77, Thr78, Thr79, 140 to 142 (EDF), Arg183, Tyr193, and Arg230 each bind ATP. Residue Thr78 participates in Mg(2+) binding. Residues 194 to 264 (TPDELGFIVS…VADAALRMLD (71 aa)) are small ATPAse domain (RuvB-S). Residues 267-352 (SLGLDLMDRK…RPGGTDLFGG (86 aa)) form a head domain (RuvB-H) region. Residues Arg322 and Arg327 each contribute to the DNA site.

This sequence belongs to the RuvB family. Homohexamer. Forms an RuvA(8)-RuvB(12)-Holliday junction (HJ) complex. HJ DNA is sandwiched between 2 RuvA tetramers; dsDNA enters through RuvA and exits via RuvB. An RuvB hexamer assembles on each DNA strand where it exits the tetramer. Each RuvB hexamer is contacted by two RuvA subunits (via domain III) on 2 adjacent RuvB subunits; this complex drives branch migration. In the full resolvosome a probable DNA-RuvA(4)-RuvB(12)-RuvC(2) complex forms which resolves the HJ.

Its subcellular location is the cytoplasm. The catalysed reaction is ATP + H2O = ADP + phosphate + H(+). Its function is as follows. The RuvA-RuvB-RuvC complex processes Holliday junction (HJ) DNA during genetic recombination and DNA repair, while the RuvA-RuvB complex plays an important role in the rescue of blocked DNA replication forks via replication fork reversal (RFR). RuvA specifically binds to HJ cruciform DNA, conferring on it an open structure. The RuvB hexamer acts as an ATP-dependent pump, pulling dsDNA into and through the RuvAB complex. RuvB forms 2 homohexamers on either side of HJ DNA bound by 1 or 2 RuvA tetramers; 4 subunits per hexamer contact DNA at a time. Coordinated motions by a converter formed by DNA-disengaged RuvB subunits stimulates ATP hydrolysis and nucleotide exchange. Immobilization of the converter enables RuvB to convert the ATP-contained energy into a lever motion, pulling 2 nucleotides of DNA out of the RuvA tetramer per ATP hydrolyzed, thus driving DNA branch migration. The RuvB motors rotate together with the DNA substrate, which together with the progressing nucleotide cycle form the mechanistic basis for DNA recombination by continuous HJ branch migration. Branch migration allows RuvC to scan DNA until it finds its consensus sequence, where it cleaves and resolves cruciform DNA. This is Holliday junction branch migration complex subunit RuvB from Azoarcus sp. (strain BH72).